A 424-amino-acid chain; its full sequence is Methylenetetrahydrofolate--tRNA-(uracil-5-)-methyltransferase TrmFO 1 (424 aa).

8–13 (GAGLSG) provides a ligand contact to FAD.

It belongs to the MnmG family. TrmFO subfamily. The cofactor is FAD.

The protein resides in the cytoplasm. It catalyses the reaction uridine(54) in tRNA + (6R)-5,10-methylene-5,6,7,8-tetrahydrofolate + NADH + H(+) = 5-methyluridine(54) in tRNA + (6S)-5,6,7,8-tetrahydrofolate + NAD(+). The enzyme catalyses uridine(54) in tRNA + (6R)-5,10-methylene-5,6,7,8-tetrahydrofolate + NADPH + H(+) = 5-methyluridine(54) in tRNA + (6S)-5,6,7,8-tetrahydrofolate + NADP(+). In terms of biological role, catalyzes the folate-dependent formation of 5-methyl-uridine at position 54 (M-5-U54) in all tRNAs. This chain is Methylenetetrahydrofolate--tRNA-(uracil-5-)-methyltransferase TrmFO 1, found in Mycoplasma mycoides subsp. mycoides SC (strain CCUG 32753 / NCTC 10114 / PG1).